The following is a 457-amino-acid chain: Na(+)/H(+) antiporter NhaA (457 aa).

11 helical membrane-spanning segments follow: residues 33–53 (ASGI…NSPL), 76–96 (FSLA…VVGM), 114–134 (LLPL…FLAF), 142–162 (AGWG…LTLL), 172–192 (VFVT…IALF), 196–216 (GLQL…ALMS), 235–255 (YALH…GLAI), 308–328 (FVHA…ALAN), 349–369 (TALA…WIAV), 385–405 (LIGV…IAGL), and 419–439 (VGIL…LRLT).

This sequence belongs to the NhaA Na(+)/H(+) (TC 2.A.33) antiporter family.

The protein resides in the cell inner membrane. It carries out the reaction Na(+)(in) + 2 H(+)(out) = Na(+)(out) + 2 H(+)(in). Na(+)/H(+) antiporter that extrudes sodium in exchange for external protons. The protein is Na(+)/H(+) antiporter NhaA of Anaeromyxobacter sp. (strain Fw109-5).